Consider the following 287-residue polypeptide: 2-dehydro-3-deoxyphosphooctonate aldolase (287 aa).

The protein belongs to the KdsA family.

The protein localises to the cytoplasm. The catalysed reaction is D-arabinose 5-phosphate + phosphoenolpyruvate + H2O = 3-deoxy-alpha-D-manno-2-octulosonate-8-phosphate + phosphate. It participates in carbohydrate biosynthesis; 3-deoxy-D-manno-octulosonate biosynthesis; 3-deoxy-D-manno-octulosonate from D-ribulose 5-phosphate: step 2/3. The protein operates within bacterial outer membrane biogenesis; lipopolysaccharide biosynthesis. The chain is 2-dehydro-3-deoxyphosphooctonate aldolase from Magnetococcus marinus (strain ATCC BAA-1437 / JCM 17883 / MC-1).